The primary structure comprises 706 residues: F-box/WD repeat-containing protein 7 (706 aa).

The segment at 1–157 (MNQELLSVGS…IVDLPIHQRS (157 aa)) is disordered. Phosphoserine is present on Ser-26. The span at 32 to 54 (QMNRVLEEEQQQPRHQEEEHAAR) shows a compositional bias: basic and acidic residues. Over residues 69 to 83 (NDPQQGQLEENNNRF) the composition is skewed to polar residues. Positions 86-128 (VDEDSSGNQEEQEEDEEHAGEQDEEDEEEEEMDQESDDFDQSD) are enriched in acidic residues. A compositionally biased stretch (basic and acidic residues) spans 129–138 (DSSREDEHTH). A Phosphothreonine modification is found at Thr-204. Position 226 is a phosphoserine (Ser-226). Positions 277–323 (RDFISLLPKELALYVLSFLEPKDLLQAAQTCRYWRILAEDNLLWREK) constitute an F-box domain. WD repeat units follow at residues 377 to 417 (GHDD…RTLV), 419 to 455 (HTGG…CIHT), 458 to 497 (GHTS…HVLM), 499 to 535 (HVAA…CLHT), 538 to 577 (GHTN…HTLT), 579 to 617 (HQSL…QTLQ), and 621 to 658 (KHQS…FIRN).

Homodimer; homodimerization plays a role in substrate binding and/or ubiquitination and degradation. Component of the SCF(FBXW7) complex consisting of CUL1, RBX1, SKP1 and FBXW7. Interacts (via F-box domain) with SKP1. Interacts (via F-box domain) with pseudophosphatase STYX; the interaction is direct and prevents FBXW7 interaction with SKP1. Interacts with cyclin-E (CCNE1 or CCNE2). Interacts with PSEN1. Forms a trimeric complex with NOTCH1 and SGK1. Interacts with NOTCH1 intracellular domain/NICD and NOTCH4 intracellular domain/NICD. Interacts with NOTCH2 intracellular domain (N2ICD). Interacts with MYC (when phosphorylated). Interacts with USP28, counteracting ubiquitination of MYC. Interacts with JUN. Found in a complex with JUN and PRR7. Interacts with JUN and PRR7; the interaction inhibits ubiquitination-mediated JUN degradation, promoting its phosphorylation and transcriptional activity. Interacts (when phosphorylated at Thr-204) with PIN1, disrupting FBXW7 dimerization and promoting FBXW7 autoubiquitination and degradation. Interacts with UBE2QL1. Interacts with FAM83D; promotes FBXW7 degradation. Interacts with MYCN; FBXW7 competes with AURKA for binding to unphosphorylated MYCN but not for binding to phosphorylated MYCN. Interacts with STOML1. Interacts with NFE2L1. Interacts with USP36, counteracting ubiquitination of MYC. Interacts with RICTOR; mediates RICTOR ubiquitination and degradation.l Interacts with USP38, counteracting ubiquitination of MYC. As to quaternary structure, (Microbial infection) In case of infection, interacts with T.annulata PIN1 (TaPIN1); leading to FBXW7 autoubiquitination and subsequent degradation: FBXW7 degradation promotes stabilization of JUN, which promotes cell transformation. Phosphorylation at Thr-204 promotes interaction with PIN1, leading to disrupt FBXW7 dimerization and promoting FBXW7 autoubiquitination and degradation. Phosphorylated by ATM at Ser-26 in response to DNA damage, promoting recruitment to DNA damage sites and 'Lys-63'-linked ubiquitination of phosphorylated XRCC4. Post-translationally, ubiquitinated: autoubiquitinates following phosphorylation at Thr-204 and subsequent interaction with PIN1. Ubiquitination leads to its degradation.

Its subcellular location is the nucleus. The protein resides in the nucleoplasm. The protein localises to the chromosome. Its pathway is protein modification; protein ubiquitination. In terms of biological role, substrate recognition component of a SCF (SKP1-CUL1-F-box protein) E3 ubiquitin-protein ligase complex which mediates the ubiquitination and subsequent proteasomal degradation of target proteins. Recognizes and binds phosphorylated sites/phosphodegrons within target proteins and thereafter brings them to the SCF complex for ubiquitination. Identified substrates include cyclin-E (CCNE1 or CCNE2), DISC1, JUN, MYC, NOTCH1 released notch intracellular domain (NICD), NOTCH2, MCL1, MLST8, RICTOR, and probably PSEN1. Acts as a negative regulator of JNK signaling by binding to phosphorylated JUN and promoting its ubiquitination and subsequent degradation. SCF(FBXW7) complex mediates the ubiquitination and subsequent degradation of NFE2L1. Involved in bone homeostasis and negative regulation of osteoclast differentiation. Also able to promote 'Lys-63'-linked ubiquitination in response to DNA damage. The SCF(FBXW7) complex facilitates double-strand break repair following phosphorylation by ATM: phosphorylation promotes localization to sites of double-strand breaks and 'Lys-63'-linked ubiquitination of phosphorylated XRCC4, enhancing DNA non-homologous end joining. The polypeptide is F-box/WD repeat-containing protein 7 (Bos taurus (Bovine)).